The following is a 327-amino-acid chain: Germination protease (327 aa).

Residues 1 to 7 (MNSVRTD) constitute a propeptide that is removed on maturation.

Belongs to the peptidase A25 family. As to quaternary structure, homotetramer. In terms of processing, autoproteolytically processed. The inactive tetrameric zymogen termed p46 autoprocesses to a smaller form termed p41, which is active only during spore germination.

It catalyses the reaction Endopeptidase action with P4 Glu or Asp, P1 preferably Glu &gt; Asp, P1' hydrophobic and P2' Ala.. Initiates the rapid degradation of small, acid-soluble proteins during spore germination. The chain is Germination protease from Clostridium acetobutylicum (strain ATCC 824 / DSM 792 / JCM 1419 / IAM 19013 / LMG 5710 / NBRC 13948 / NRRL B-527 / VKM B-1787 / 2291 / W).